A 229-amino-acid chain; its full sequence is E3 ubiquitin-protein ligase RNF114 (229 aa).

Residues 1 to 23 (MAAAQPESRDGAAQSAKPASETD) are disordered. The segment at 30–69 (CPVCLEVFEKPVQVPCGHVFCSACLQECLKPKKPVCGVCR) adopts an RING-type zinc-finger fold. Residues Cys92 and Cys95 each contribute to the Zn(2+) site. Residues 92–111 (CHGCRKNFILSKIRAHVTSC) form a C2HC RNF-type zinc finger. Lys103 carries the post-translational modification N6-acetyllysine. Positions 107 and 111 each coordinate Zn(2+). An N6-acetyllysine modification is found at Lys113.

As to quaternary structure, interacts with XAF1, the interaction increases XAF1 stability and proapoptotic effects, and may regulate IFN signaling. Autoubiquitinated. Polyubiquitinated in the presence of E2 enzymes UBE2D1, UBE2D2 and UBE2D3, but only monoubiquitinated in the presence of UBE2E1.

Its subcellular location is the cytoplasm. The protein resides in the nucleus. It catalyses the reaction S-ubiquitinyl-[E2 ubiquitin-conjugating enzyme]-L-cysteine + [acceptor protein]-L-lysine = [E2 ubiquitin-conjugating enzyme]-L-cysteine + N(6)-ubiquitinyl-[acceptor protein]-L-lysine.. It functions in the pathway protein modification; protein ubiquitination. Its function is as follows. E3 ubiquitin-protein ligase that promotes the ubiquitination of various substrates. In turn, participates in the regulation of many biological processes including cell cycle, apoptosis, osteoclastogenesis as well as innate or adaptive immunity. Acts as negative regulator of NF-kappa-B-dependent transcription by promoting the ubiquitination and stabilization of the NF-kappa-B inhibitor TNFAIP3. May promote the ubiquitination of TRAF6 as well. Also acts as a negative regulator of T-cell activation. Inhibits cellular dsRNA responses and interferon production by targeting MAVS component for proteasomal degradation. Ubiquitinates the CDK inhibitor CDKN1A leading to its degradationand probably also CDKN1B and CDKN1C. This activity stimulates cell cycle G1-to-S phase transition and suppresses cellular senescence. May play a role in spermatogenesis. The chain is E3 ubiquitin-protein ligase RNF114 (Rnf114) from Mus musculus (Mouse).